The chain runs to 104 residues: Large ribosomal subunit protein bL21 (104 aa).

The protein belongs to the bacterial ribosomal protein bL21 family. Part of the 50S ribosomal subunit. Contacts protein L20.

Its function is as follows. This protein binds to 23S rRNA in the presence of protein L20. This is Large ribosomal subunit protein bL21 from Thermotoga sp. (strain RQ2).